A 245-amino-acid polypeptide reads, in one-letter code: Octanoyltransferase (245 aa).

A BPL/LPL catalytic domain is found at 54-238 (GEATELVWLL…AFENIFGETR (185 aa)). Substrate contacts are provided by residues 92–99 (RGGQLTYH), 167–169 (AIG), and 180–182 (GIA). Residue Cys198 is the Acyl-thioester intermediate of the active site.

It belongs to the LipB family.

Its subcellular location is the cytoplasm. It carries out the reaction octanoyl-[ACP] + L-lysyl-[protein] = N(6)-octanoyl-L-lysyl-[protein] + holo-[ACP] + H(+). It participates in protein modification; protein lipoylation via endogenous pathway; protein N(6)-(lipoyl)lysine from octanoyl-[acyl-carrier-protein]: step 1/2. Its function is as follows. Catalyzes the transfer of endogenously produced octanoic acid from octanoyl-acyl-carrier-protein onto the lipoyl domains of lipoate-dependent enzymes. Lipoyl-ACP can also act as a substrate although octanoyl-ACP is likely to be the physiological substrate. This chain is Octanoyltransferase, found in Rhodopseudomonas palustris (strain TIE-1).